The primary structure comprises 89 residues: Small membrane A-kinase anchor protein (89 aa).

The disordered stretch occupies residues 1–29; sequence MGCMKSKRRDPTQNSDSSEKVDGKPGKHG. Gly2 carries N-myristoyl glycine lipidation. The segment covering 17 to 29 has biased composition (basic and acidic residues); sequence SSEKVDGKPGKHG.

The protein belongs to the small membrane AKAP family. Post-translationally, may be palmitoylated at Cys-3.

It is found in the cell membrane. Binds to type I regulatory subunits of protein kinase A and may anchor/target them to the plasma membrane. The sequence is that of Small membrane A-kinase anchor protein from Danio rerio (Zebrafish).